The following is a 478-amino-acid chain: MAGEIQDPFSLSFQGNSIHSGSISFGRFEKEGLSWEKRSSFSHNRYLEEVDKCSKPGSVTEMKAHFEAHFKKKGIRFPASLESQTWGVHQTSNEPDDEAVHATESFEDYRSDGSFSEDTSQSNSVCNYSHEQEKCGQGKSQCEFDEESDHCVSYDEILVNSDEVIELDEEEGGGDHGRVADLVECENLGPPEMPQEIVIQDSALVEEAGSKLDEHASKKPSNSMETPSSSVNVKPIIPNDVRVTKASTKGHDVTPKAASRRTKGSSLSSNSKTNVDAKSQKELRPKKTIESQPKSSNKTETRPPIATNRCKTSTTSSKLEMSTGSTSFRFKCSERAEKRKEFYMKLEEKIHAKKTETNQVQAKTQQKAEAEIKQFRKSLNFKATPMPSFYNIGTRPVSHNKTEPSKVAQSRSRPATSASITNRAVTRVSYKHGFEEAEMVKVMVSNRKQSAAKDSDLQKGNLMAVEMKQQIGARRSRN.

Disordered regions lie at residues Asp201–Thr326 and Pro385–Ile420. The span at Ala208–Ser217 shows a compositional bias: basic and acidic residues. Composition is skewed to polar residues over residues Lys219–Asn232 and Gly264–Ala277. Over residues Lys278 to Ile289 the composition is skewed to basic and acidic residues. Composition is skewed to polar residues over residues Arg309–Thr326 and Val407–Ile420.

The protein belongs to the TPX2 family. Expressed in seedlings.

The protein resides in the cytoplasm. Its subcellular location is the cytoskeleton. Functionally, microtubule-associated protein (MAP) that regulates the orientation of interphase cortical microtubules. In Arabidopsis thaliana (Mouse-ear cress), this protein is Protein WVD2-like 7.